The sequence spans 418 residues: Serine--tRNA ligase (418 aa).

228–230 lines the L-serine pocket; it reads TSE. Residues 258–260 and Val274 contribute to the ATP site; that span reads RKE. An L-serine-binding site is contributed by Glu281. 345–348 contributes to the ATP binding site; sequence EVVS. Thr381 serves as a coordination point for L-serine.

It belongs to the class-II aminoacyl-tRNA synthetase family. Type-1 seryl-tRNA synthetase subfamily. As to quaternary structure, homodimer. The tRNA molecule binds across the dimer.

The protein resides in the cytoplasm. The catalysed reaction is tRNA(Ser) + L-serine + ATP = L-seryl-tRNA(Ser) + AMP + diphosphate + H(+). It carries out the reaction tRNA(Sec) + L-serine + ATP = L-seryl-tRNA(Sec) + AMP + diphosphate + H(+). It participates in aminoacyl-tRNA biosynthesis; selenocysteinyl-tRNA(Sec) biosynthesis; L-seryl-tRNA(Sec) from L-serine and tRNA(Sec): step 1/1. In terms of biological role, catalyzes the attachment of serine to tRNA(Ser). Is also able to aminoacylate tRNA(Sec) with serine, to form the misacylated tRNA L-seryl-tRNA(Sec), which will be further converted into selenocysteinyl-tRNA(Sec). In Cenarchaeum symbiosum (strain A), this protein is Serine--tRNA ligase.